Reading from the N-terminus, the 410-residue chain is E3 ubiquitin-protein ligase ICP0 (410 aa).

The RING-type zinc finger occupies 46–85 (CPICLDVAATEAQTLPCMHKFCLDCIQRWTLTSTACPLCN). A disordered region spans residues 243 to 410 (TSESEAHSDS…IFIDLTQDDD (168 aa)). The segment covering 287–315 (APRRSPRRARRAAVLRREQRRTRCLRRGR) has biased composition (basic residues). Composition is skewed to low complexity over residues 329–340 (SSGEGSSAQHGA) and 348–399 (GSAN…PRSA).

In terms of processing, auto-ubiquitinated.

It carries out the reaction S-ubiquitinyl-[E2 ubiquitin-conjugating enzyme]-L-cysteine + [acceptor protein]-L-lysine = [E2 ubiquitin-conjugating enzyme]-L-cysteine + N(6)-ubiquitinyl-[acceptor protein]-L-lysine.. Functionally, evades nuclear antiviral defenses triggered by dsDNA viruses. Acts during the initial stages of lytic infection and the reactivation of latent viral genome. Prevents the antiviral effect of nuclear bodies by degrading host PML and SP100. The chain is E3 ubiquitin-protein ligase ICP0 (EP0) from Sus scrofa (Pig).